Here is a 188-residue protein sequence, read N- to C-terminus: Large ribosomal subunit protein bL9 (188 aa).

Positions 149 to 170 (RSEEEAERQARGEEIGVEKEEP) are enriched in basic and acidic residues. Residues 149-188 (RSEEEAERQARGEEIGVEKEEPSGFVEEALEETVEAPAEA) form a disordered region.

The protein belongs to the bacterial ribosomal protein bL9 family.

Binds to the 23S rRNA. In Gluconacetobacter diazotrophicus (strain ATCC 49037 / DSM 5601 / CCUG 37298 / CIP 103539 / LMG 7603 / PAl5), this protein is Large ribosomal subunit protein bL9.